Here is a 621-residue protein sequence, read N- to C-terminus: F-box/LRR-repeat protein 4 (621 aa).

Asymmetric dimethylarginine is present on R28. The region spanning 277–332 is the F-box domain; the sequence is NGYFDKLPYELIQLILNHLTLPDLCRLAQTCKLLNQHCCDPLQYIHLNLQPYWAKL. LRR repeat units lie at residues 376-397, 402-421, 427-448, 452-474, 480-501, 504-524, 532-558, 559-583, and 584-609; these read ELVR…EIIS, NLQD…AFSH, GLKR…SILN, DLQH…ASMI, KLRT…AELA, CPLL…STGC, LPNL…ASNC, TRLR…LLES, and CKDL…LSAS.

As to quaternary structure, part of a SCF (SKP1-CUL1-F-box) protein ligase complex. Interacts with FAF2 and VCP. Interacts with PPTC7; this interaction promotes destruction of BNIP3 and NIX and mitophagy suppression.

It localises to the cytoplasm. Its subcellular location is the nucleus. It is found in the mitochondrion outer membrane. Substrate-recognition component of the mitochondria-localized SCF-FBXL4 ubiquitin E3 ligase complex that plays a role in the restriction of mitophagy by controlling the degradation of BNIP3 and NIX mitophagy receptors. Also rescues mitochondrial injury through reverting hyperactivation of DRP1-mediated mitochondrial fission. The chain is F-box/LRR-repeat protein 4 (FBXL4) from Bos taurus (Bovine).